The following is a 106-amino-acid chain: ATP-dependent Clp protease adapter protein ClpS (106 aa).

This sequence belongs to the ClpS family. Binds to the N-terminal domain of the chaperone ClpA.

Functionally, involved in the modulation of the specificity of the ClpAP-mediated ATP-dependent protein degradation. This Aliivibrio salmonicida (strain LFI1238) (Vibrio salmonicida (strain LFI1238)) protein is ATP-dependent Clp protease adapter protein ClpS.